We begin with the raw amino-acid sequence, 251 residues long: Triosephosphate isomerase (251 aa).

Residue 9–11 (NWK) participates in substrate binding. The active-site Electrophile is histidine 95. Glutamate 167 serves as the catalytic Proton acceptor. Substrate contacts are provided by residues glycine 173, serine 213, and 234–235 (GG). Serine 213 is modified (phosphoserine).

Belongs to the triosephosphate isomerase family. Homodimer.

It localises to the cytoplasm. The catalysed reaction is D-glyceraldehyde 3-phosphate = dihydroxyacetone phosphate. Its pathway is carbohydrate biosynthesis; gluconeogenesis. The protein operates within carbohydrate degradation; glycolysis; D-glyceraldehyde 3-phosphate from glycerone phosphate: step 1/1. Involved in the gluconeogenesis. Catalyzes stereospecifically the conversion of dihydroxyacetone phosphate (DHAP) to D-glyceraldehyde-3-phosphate (G3P). This chain is Triosephosphate isomerase, found in Anoxybacillus flavithermus (strain DSM 21510 / WK1).